Reading from the N-terminus, the 330-residue chain is Inactive serine protease 45 (330 aa).

Residues 1 to 35 form the signal peptide; sequence MATSLRLLDAGPGSLRRWIPTCFAALLLLPPRPNL. Residues 45-291 form the Peptidase S1 domain; it reads VCGAPWWSDS…YTGWIKEQVS (247 aa). 4 disulfide bridges follow: C75/C91, C172/C249, C207/C230, and C239/C267. N272 carries an N-linked (GlcNAc...) asparagine glycan.

The protein belongs to the peptidase S1 family.

It localises to the secreted. The sequence is that of Inactive serine protease 45 (Prss45) from Rattus norvegicus (Rat).